The chain runs to 155 residues: Leader peptidase HopD (155 aa).

It belongs to the peptidase A24 family.

This is Leader peptidase HopD (hopD) from Salmonella typhimurium (strain LT2 / SGSC1412 / ATCC 700720).